The sequence spans 411 residues: Phosphoglycerate kinase (411 aa).

Substrate-binding positions include 28-30 (DIN), Arg45, 68-71 (HQSR), Arg125, and Arg165. Residues Glu338 and 364–367 (GGHL) contribute to the ATP site.

This sequence belongs to the phosphoglycerate kinase family. In terms of assembly, homodimer.

It is found in the cytoplasm. It catalyses the reaction (2R)-3-phosphoglycerate + ATP = (2R)-3-phospho-glyceroyl phosphate + ADP. It functions in the pathway carbohydrate degradation; glycolysis; pyruvate from D-glyceraldehyde 3-phosphate: step 2/5. This Methanothermobacter thermautotrophicus (strain ATCC 29096 / DSM 1053 / JCM 10044 / NBRC 100330 / Delta H) (Methanobacterium thermoautotrophicum) protein is Phosphoglycerate kinase (pgk).